The chain runs to 247 residues: 3(1)-hydroxy-L-isoleucine 4-dioxygenase (247 aa).

Fe cation is bound by residues histidine 160, aspartate 162, and histidine 213.

This sequence belongs to the iron/ascorbate-dependent oxidoreductase family. L-ascorbate is required as a cofactor. It depends on Fe(2+) as a cofactor.

It catalyses the reaction 3(1)-hydroxy-L-isoleucine + 2-oxoglutarate + O2 = (4S)-3(1),4-dihydroxy-L-isoleucine + succinate + CO2. Catalyzes the hydroxylation of L-4'-hydroxyisoleucine (4'-HIL) at the C-4 position to form L-4,4'-dihydroxyisoleucine (4,4'-DIHIL). Together with HilA, catalyzes the two step conversion of L-isoleucine into L-4,4'-dihydroxyisoleucine. In vitro, in the absence of HilA, can also catalyze the oxidation of L-methionine and the C-4-hydroxylation of L-leucine and L-isoleucine. The sequence is that of 3(1)-hydroxy-L-isoleucine 4-dioxygenase from Pantoea ananatis (strain AJ13355).